Reading from the N-terminus, the 305-residue chain is Serine/threonine-protein phosphatase 6 catalytic subunit (305 aa).

Aspartate 54, histidine 56, aspartate 82, and asparagine 114 together coordinate Mn(2+). Residue histidine 115 is the Proton donor of the active site. Mn(2+)-binding residues include histidine 164 and histidine 238.

This sequence belongs to the PPP phosphatase family. PP-6 (PP-V) subfamily. It depends on Mn(2+) as a cofactor.

The catalysed reaction is O-phospho-L-seryl-[protein] + H2O = L-seryl-[protein] + phosphate. It catalyses the reaction O-phospho-L-threonyl-[protein] + H2O = L-threonyl-[protein] + phosphate. The sequence is that of Serine/threonine-protein phosphatase 6 catalytic subunit (ppp6c) from Dictyostelium discoideum (Social amoeba).